The chain runs to 382 residues: ATP phosphoribosyltransferase regulatory subunit (382 aa).

It belongs to the class-II aminoacyl-tRNA synthetase family. HisZ subfamily. Heteromultimer composed of HisG and HisZ subunits.

The protein localises to the cytoplasm. It participates in amino-acid biosynthesis; L-histidine biosynthesis; L-histidine from 5-phospho-alpha-D-ribose 1-diphosphate: step 1/9. Functionally, required for the first step of histidine biosynthesis. May allow the feedback regulation of ATP phosphoribosyltransferase activity by histidine. The chain is ATP phosphoribosyltransferase regulatory subunit from Lacticaseibacillus casei (strain BL23) (Lactobacillus casei).